A 430-amino-acid chain; its full sequence is MTTLIKNAQVWQAGQLQTTDILIAEGRIKAIGHQLHDQFGPADHVICADQHFVSPGFVDVHVHLRDPGQTAKETIATGTLAAAHGGFTTVGAMPNVDPVPDTPERVATMVARNQQEAHVHVAQYASITTGRTSEQLVDFAGIKAAGAFAVSNDGSGVQTAGTMFAAMQGAAKVGLPLAAHVEDDSLYHHGVMNAGPVADRLGLPGINNVSEAAQVARDVMLAEASGVHYHVCHVSTAESLRVIRNAKAAGINVTCEVSPHHLLLCDEDITMDNPMLKMNPPLRSAKDRAALVAGLLDGTIDMIATDHAPHTDAEKQGSMKTAAFGITGIETAFATLYTALVKTRLLTLGRLIELMSTRPAELFGLNTAGRLVVGAPADLTIIDLDHQYEIEAATMLSKGHNSPFIGWPVYGNVLMTLVDGKLAYGKETQA.

His61 and His63 together coordinate Zn(2+). Residues 63–65 (HLR) and Asn95 contribute to the substrate site. The Zn(2+) site is built by Asp153, His180, and His233. Asn279 lines the substrate pocket. Asp306 serves as a coordination point for Zn(2+). Asp306 is an active-site residue. Substrate is bound by residues His310 and 324 to 325 (FG).

This sequence belongs to the metallo-dependent hydrolases superfamily. DHOase family. Class I DHOase subfamily. Zn(2+) is required as a cofactor.

The catalysed reaction is (S)-dihydroorotate + H2O = N-carbamoyl-L-aspartate + H(+). The protein operates within pyrimidine metabolism; UMP biosynthesis via de novo pathway; (S)-dihydroorotate from bicarbonate: step 3/3. Functionally, catalyzes the reversible cyclization of carbamoyl aspartate to dihydroorotate. This Lactiplantibacillus plantarum (strain ATCC BAA-793 / NCIMB 8826 / WCFS1) (Lactobacillus plantarum) protein is Dihydroorotase.